We begin with the raw amino-acid sequence, 293 residues long: Pyridoxal 5'-phosphate synthase subunit PdxS (293 aa).

Position 23 (Asp23) interacts with D-ribose 5-phosphate. Catalysis depends on Lys80, which acts as the Schiff-base intermediate with D-ribose 5-phosphate. Gly152 provides a ligand contact to D-ribose 5-phosphate. Arg164 is a D-glyceraldehyde 3-phosphate binding site. Residues Gly213 and 234-235 (GS) contribute to the D-ribose 5-phosphate site.

Belongs to the PdxS/SNZ family. In terms of assembly, in the presence of PdxT, forms a dodecamer of heterodimers.

The enzyme catalyses aldehydo-D-ribose 5-phosphate + D-glyceraldehyde 3-phosphate + L-glutamine = pyridoxal 5'-phosphate + L-glutamate + phosphate + 3 H2O + H(+). The protein operates within cofactor biosynthesis; pyridoxal 5'-phosphate biosynthesis. Its function is as follows. Catalyzes the formation of pyridoxal 5'-phosphate from ribose 5-phosphate (RBP), glyceraldehyde 3-phosphate (G3P) and ammonia. The ammonia is provided by the PdxT subunit. Can also use ribulose 5-phosphate and dihydroxyacetone phosphate as substrates, resulting from enzyme-catalyzed isomerization of RBP and G3P, respectively. The chain is Pyridoxal 5'-phosphate synthase subunit PdxS from Niallia circulans (Bacillus circulans).